Here is a 697-residue protein sequence, read N- to C-terminus: Elongation factor G (697 aa).

Residues 10-285 (AKTRNIGIMA…GVIDYLPSPL (276 aa)) enclose the tr-type G domain. Residues 19–26 (AHIDAGKT), 83–87 (DTPGH), and 137–140 (NKMD) each bind GTP.

Belongs to the TRAFAC class translation factor GTPase superfamily. Classic translation factor GTPase family. EF-G/EF-2 subfamily.

It localises to the cytoplasm. In terms of biological role, catalyzes the GTP-dependent ribosomal translocation step during translation elongation. During this step, the ribosome changes from the pre-translocational (PRE) to the post-translocational (POST) state as the newly formed A-site-bound peptidyl-tRNA and P-site-bound deacylated tRNA move to the P and E sites, respectively. Catalyzes the coordinated movement of the two tRNA molecules, the mRNA and conformational changes in the ribosome. In Lactobacillus helveticus (strain DPC 4571), this protein is Elongation factor G.